The sequence spans 435 residues: Antho-RFamide neuropeptides type 1 (435 aa).

A signal peptide spans 1–22 (MTTVSYVTILLTVLVQVLTSDA). Positions 23–193 (KATNNKRELS…SVPGRYGREL (171 aa)) are excised as a propeptide. A Pyrrolidone carboxylic acid modification is found at Gln194. Position 197 is a phenylalanine amide (Phe197). Positions 199-201 (REL) are excised as a propeptide. Position 205 is a phenylalanine amide (Phe205). The propeptide occupies 207–209 (REA). Phe213 is modified (phenylalanine amide). Positions 215–217 (REL) are excised as a propeptide. Phe221 is modified (phenylalanine amide). The propeptide occupies 223 to 225 (REF). A Phenylalanine amide modification is found at Phe229. Residues 230–371 (GREDQGRFGR…EDIAEADQGR (142 aa)) are compositionally biased toward basic and acidic residues. Disordered regions lie at residues 230–374 (GRED…RFGR) and 386–435 (AKKR…AKTS). Positions 231–233 (RED) are excised as a propeptide. Phe237 carries the post-translational modification Phenylalanine amide. Residues 239–241 (RED) constitute a propeptide that is removed on maturation. A Phenylalanine amide modification is found at Phe245. Positions 247 to 249 (RED) are excised as a propeptide. Phenylalanine amide is present on Phe253. The propeptide occupies 255 to 257 (RED). A Phenylalanine amide modification is found at Phe261. Positions 263–265 (RED) are excised as a propeptide. Phe269 bears the Phenylalanine amide mark. Positions 271-273 (RED) are excised as a propeptide. A Phenylalanine amide modification is found at Phe277. Residues 279–281 (REL) constitute a propeptide that is removed on maturation. Phenylalanine amide is present on Phe285. A propeptide spanning residues 287–289 (REF) is cleaved from the precursor. Phe293 is modified (phenylalanine amide). A propeptide spanning residues 295–297 (RED) is cleaved from the precursor. Phe301 is subject to Phenylalanine amide. A propeptide spanning residues 303 to 305 (RED) is cleaved from the precursor. Phe309 bears the Phenylalanine amide mark. A propeptide spanning residues 311 to 313 (REL) is cleaved from the precursor. Residue Phe317 is modified to Phenylalanine amide. A propeptide spanning residues 319-321 (RED) is cleaved from the precursor. Phenylalanine amide is present on Phe325. A propeptide spanning residues 327-329 (RED) is cleaved from the precursor. Position 333 is a phenylalanine amide (Phe333). Residues 335 to 342 (REDLAKED) constitute a propeptide that is removed on maturation. At Phe346 the chain carries Phenylalanine amide. Residues 348-355 (REDLAKED) constitute a propeptide that is removed on maturation. A Phenylalanine amide modification is found at Phe359. A propeptide spanning residues 361–368 (REDIAEAD) is cleaved from the precursor. Phe372 carries the phenylalanine amide modification. A propeptide spanning residues 374 to 435 (RNAAAAAAAA…KSDDALAKTS (62 aa)) is cleaved from the precursor. Positions 398-435 (SDPKPQTRFRDGKDMQEKRKVEKKDKIEKSDDALAKTS) are enriched in basic and acidic residues.

This sequence belongs to the FARP (FMRFamide related peptide) family.

It localises to the secreted. In terms of biological role, not known but it could act as a transmitter at neuromuscular synapses. The sequence is that of Antho-RFamide neuropeptides type 1 from Anthopleura elegantissima (Green aggregating anemone).